A 282-amino-acid polypeptide reads, in one-letter code: B3 domain-containing protein At5g25475 (282 aa).

A DNA-binding region (TF-B3) is located at residues 20 to 114 (WKSLSPGQTW…NLEVQIFKNN (95 aa)). The segment at 127–178 (PETEPFHPTPKKPHKETTPASSFASGSGCSANGGTNGRGKQRSSDVKNPERY) is disordered. Residues 144–159 (TPASSFASGSGCSANG) are compositionally biased toward low complexity.

The protein localises to the nucleus. The protein is B3 domain-containing protein At5g25475 of Arabidopsis thaliana (Mouse-ear cress).